Consider the following 121-residue polypeptide: Small ribosomal subunit protein bS6 (121 aa).

Residues 99–121 (PSLMMRNVEREEARKTQQQEFAA) form a disordered region. The span at 105–115 (NVEREEARKTQ) shows a compositional bias: basic and acidic residues.

It belongs to the bacterial ribosomal protein bS6 family.

In terms of biological role, binds together with bS18 to 16S ribosomal RNA. The chain is Small ribosomal subunit protein bS6 from Polaromonas naphthalenivorans (strain CJ2).